The sequence spans 344 residues: Phosphate acyltransferase (344 aa).

It belongs to the PlsX family. Homodimer. Probably interacts with PlsY.

The protein resides in the cytoplasm. The enzyme catalyses a fatty acyl-[ACP] + phosphate = an acyl phosphate + holo-[ACP]. Its pathway is lipid metabolism; phospholipid metabolism. Catalyzes the reversible formation of acyl-phosphate (acyl-PO(4)) from acyl-[acyl-carrier-protein] (acyl-ACP). This enzyme utilizes acyl-ACP as fatty acyl donor, but not acyl-CoA. This Sodalis glossinidius (strain morsitans) protein is Phosphate acyltransferase.